The sequence spans 393 residues: Arginine biosynthesis bifunctional protein ArgJ (393 aa).

Residues threonine 143, lysine 168, threonine 179, glutamate 265, asparagine 388, and threonine 393 each coordinate substrate. The active-site Nucleophile is the threonine 179.

The protein belongs to the ArgJ family. In terms of assembly, heterotetramer of two alpha and two beta chains.

The protein localises to the cytoplasm. It catalyses the reaction N(2)-acetyl-L-ornithine + L-glutamate = N-acetyl-L-glutamate + L-ornithine. The catalysed reaction is L-glutamate + acetyl-CoA = N-acetyl-L-glutamate + CoA + H(+). The protein operates within amino-acid biosynthesis; L-arginine biosynthesis; L-ornithine and N-acetyl-L-glutamate from L-glutamate and N(2)-acetyl-L-ornithine (cyclic): step 1/1. Its pathway is amino-acid biosynthesis; L-arginine biosynthesis; N(2)-acetyl-L-ornithine from L-glutamate: step 1/4. Catalyzes two activities which are involved in the cyclic version of arginine biosynthesis: the synthesis of N-acetylglutamate from glutamate and acetyl-CoA as the acetyl donor, and of ornithine by transacetylation between N(2)-acetylornithine and glutamate. This is Arginine biosynthesis bifunctional protein ArgJ from Syntrophotalea carbinolica (strain DSM 2380 / NBRC 103641 / GraBd1) (Pelobacter carbinolicus).